The sequence spans 481 residues: Long chain base biosynthesis protein 1b (481 aa).

Residues 32–52 form a helical membrane-spanning segment; it reads FGIHIDGHLVVEGLLIAAILF.

The protein belongs to the class-II pyridoxal-phosphate-dependent aminotransferase family. In terms of assembly, heterodimer with LCB2. Component of the serine palmitoyltransferase (SPT) complex, composed of LCB1 and LCB2. The cofactor is pyridoxal 5'-phosphate.

It is found in the endoplasmic reticulum membrane. It catalyses the reaction L-serine + hexadecanoyl-CoA + H(+) = 3-oxosphinganine + CO2 + CoA. Its pathway is lipid metabolism; sphingolipid metabolism. Functionally, serine palmitoyltransferase (SPT). The heterodimer formed with LCB2 constitutes the catalytic core. This Oryza sativa subsp. japonica (Rice) protein is Long chain base biosynthesis protein 1b.